The sequence spans 145 residues: Trafficking protein particle complex subunit 1 (145 aa).

The protein belongs to the TRAPP small subunits family. BET5 subfamily. Part of the multisubunit transport protein particle (TRAPP) complex. The heterodimer TRAPPC6B-TRAPPC3 interacts with TRAPPC1 likely providing a core for TRAPP complex formation.

Its subcellular location is the golgi apparatus. It localises to the cis-Golgi network. It is found in the endoplasmic reticulum. In terms of biological role, may play a role in vesicular transport from endoplasmic reticulum to Golgi. This chain is Trafficking protein particle complex subunit 1, found in Mus musculus (Mouse).